The primary structure comprises 188 residues: Probable DNA-directed RNA polymerase subunit delta (188 aa).

In terms of domain architecture, HTH HARE-type spans 14-81; the sequence is LSMIEVAHAL…GNNVWALRSW (68 aa). The segment at 96–188 is disordered; that stretch reads EIEDEEEEEK…EDDSDDTDED (93 aa). Acidic residues-rich tracts occupy residues 118-150 and 158-188; these read IEDE…EDKD and ELAE…TDED.

This sequence belongs to the RpoE family. In terms of assembly, RNAP is composed of a core of 2 alpha, a beta and a beta' subunits. The core is associated with a delta subunit and one of several sigma factors.

Participates in both the initiation and recycling phases of transcription. In the presence of the delta subunit, RNAP displays an increased specificity of transcription, a decreased affinity for nucleic acids, and an increased efficiency of RNA synthesis because of enhanced recycling. The protein is Probable DNA-directed RNA polymerase subunit delta of Lactococcus lactis subsp. cremoris (strain MG1363).